The chain runs to 294 residues: MPSLKDLKNRIASVKATQKITKAMKMVAAAKLRRAQEAAEAARPYSQRMNTVLANIAKAVTDADGAPVLMTGTGKDQVHLLVVCTAERGLCGGFNSQIARFARDHVRKLVAEGKTVKIFTVGKKGYDILRREFASLIVERKELREVKKIGFENADQIGKRIIEMFEAGEFDVCTLFYSEFKSVISQVPTAQQLIPAKAPEAVAEDADHAGAVYEYEPDPAAILDDLIPRNISVQIFRALLENVAGEMGAKMSAMDNATRNAGEMINKLTLSYNRQRQAQITKELIEIISGAEAL.

This sequence belongs to the ATPase gamma chain family. As to quaternary structure, F-type ATPases have 2 components, CF(1) - the catalytic core - and CF(0) - the membrane proton channel. CF(1) has five subunits: alpha(3), beta(3), gamma(1), delta(1), epsilon(1). CF(0) has three main subunits: a, b and c.

It is found in the cell inner membrane. Its function is as follows. Produces ATP from ADP in the presence of a proton gradient across the membrane. The gamma chain is believed to be important in regulating ATPase activity and the flow of protons through the CF(0) complex. This chain is ATP synthase gamma chain, found in Rhizobium etli (strain CIAT 652).